A 298-amino-acid polypeptide reads, in one-letter code: Oxidoreductase YdhF (298 aa).

Tyr-55 functions as the Proton donor in the catalytic mechanism. NADP(+) is bound by residues 158-159 (SN), 209-220 (WSCLGGGRLFND), and 263-264 (SG).

This sequence belongs to the aldo/keto reductase family. Aldo/keto reductase 2 subfamily.

May function as oxidoreductase. The sequence is that of Oxidoreductase YdhF (ydhF) from Escherichia coli (strain K12).